The sequence spans 212 residues: Small ribosomal subunit protein eS1 (212 aa).

The protein belongs to the eukaryotic ribosomal protein eS1 family.

The chain is Small ribosomal subunit protein eS1 from Haloquadratum walsbyi (strain DSM 16790 / HBSQ001).